A 430-amino-acid chain; its full sequence is Adenylosuccinate synthetase (430 aa).

Residues 12–18 (GDEGKGK) and 40–42 (GHT) contribute to the GTP site. Asp13 functions as the Proton acceptor in the catalytic mechanism. Residues Asp13 and Gly40 each contribute to the Mg(2+) site. IMP is bound by residues 13–16 (DEGK), 38–41 (NAGH), Thr128, Arg142, Gln223, Thr238, and Arg302. The Proton donor role is filled by His41. Residue 298–304 (TTTGRPR) participates in substrate binding. GTP contacts are provided by residues Arg304, 330 to 332 (CID), and 412 to 414 (SVG).

The protein belongs to the adenylosuccinate synthetase family. As to quaternary structure, homodimer. The cofactor is Mg(2+).

Its subcellular location is the cytoplasm. It carries out the reaction IMP + L-aspartate + GTP = N(6)-(1,2-dicarboxyethyl)-AMP + GDP + phosphate + 2 H(+). It functions in the pathway purine metabolism; AMP biosynthesis via de novo pathway; AMP from IMP: step 1/2. Its function is as follows. Plays an important role in the de novo pathway of purine nucleotide biosynthesis. Catalyzes the first committed step in the biosynthesis of AMP from IMP. The protein is Adenylosuccinate synthetase of Streptococcus thermophilus (strain CNRZ 1066).